A 103-amino-acid polypeptide reads, in one-letter code: Putative protein YmfH (103 aa).

The disordered stretch occupies residues 1–34 (MVNAAQRTRVKVEADNRPSVDTHPPGVQPSPGTG). Residues 10 to 20 (VKVEADNRPSV) show a composition bias toward basic and acidic residues. Transmembrane regions (helical) follow at residues 42 to 62 (MLCV…TALF) and 73 to 93 (GLIT…CFVE).

It is found in the cell inner membrane. The chain is Putative protein YmfH (ymfH) from Escherichia coli (strain K12).